The following is a 226-amino-acid chain: Orotidine 5'-phosphate decarboxylase (226 aa).

Residues D8, K30, D58–T67, T117, R177, Q186, G206, and R207 each bind substrate. The Proton donor role is filled by K60.

Belongs to the OMP decarboxylase family. Type 1 subfamily. Homodimer.

It carries out the reaction orotidine 5'-phosphate + H(+) = UMP + CO2. Its pathway is pyrimidine metabolism; UMP biosynthesis via de novo pathway; UMP from orotate: step 2/2. Catalyzes the decarboxylation of orotidine 5'-monophosphate (OMP) to uridine 5'-monophosphate (UMP). This Campylobacter concisus (strain 13826) protein is Orotidine 5'-phosphate decarboxylase.